We begin with the raw amino-acid sequence, 308 residues long: D-alanine--D-alanine ligase (308 aa).

Positions 109-302 constitute an ATP-grasp domain; it reads KAAYAAAGLP…FGALCRWIVE (194 aa). 136 to 186 contributes to the ATP binding site; it reads MPPPYVIKPYNEGSSVGVYLVPEGAEAAPELADDLPDTLMVEAFVPGRELT. Asp-253, Glu-269, and Asn-271 together coordinate Mg(2+).

Belongs to the D-alanine--D-alanine ligase family. It depends on Mg(2+) as a cofactor. Requires Mn(2+) as cofactor.

It is found in the cytoplasm. It catalyses the reaction 2 D-alanine + ATP = D-alanyl-D-alanine + ADP + phosphate + H(+). The protein operates within cell wall biogenesis; peptidoglycan biosynthesis. Its function is as follows. Cell wall formation. In Dinoroseobacter shibae (strain DSM 16493 / NCIMB 14021 / DFL 12), this protein is D-alanine--D-alanine ligase.